The chain runs to 286 residues: L-rhamnose-binding lectin CSL1 (286 aa).

2 SUEL-type lectin domains span residues 96 to 186 (TTCE…YICL) and 193 to 280 (TCEG…YTCL).

Its function is as follows. L-rhamnose binding lectin. Has hemagglutinating activity towards rabbit erythrocytes, but not human type B erythrocytes. Hemagglutinating activity is inhibited by smooth-type lipopolysaccharide (LPS) from K.pneumoniae, E.coli K-235, S.flexneri 1A, A.salmonicida and S.minnesota and rough-type LPS from S.flexneri, but not by rough-type LPS from E.coli K12 and E.coli EH100. Agglutinates E.coli K12 and B.subtilis. This is L-rhamnose-binding lectin CSL1 from Oncorhynchus keta (Chum salmon).